The sequence spans 265 residues: Apolipoprotein A-I (265 aa).

The signal sequence occupies residues 1–18 (MKAVVLTLAVLFLTGSQA). A run of 2 repeats spans residues 67–88 (LKLL…EQLG) and 89–110 (PVTQ…QEMS). The segment at 67–265 (LKLLDNWDSL…DEASKKLNAQ (199 aa)) is 10 X approximate tandem repeats. Position 109 is a methionine sulfoxide (Met109). Residues 111–121 (KDLEEVKKKVQ) form a 3; half-length repeat. 5 consecutive repeat copies span residues 122–142 (PYLD…RQKM), 144–165 (PLGA…EKLS), 166–187 (PLAE…QHVA), 188–209 (PYSD…EGGG), and 210–230 (SLAE…EKAK). The residue at position 135 (Met135) is a Methionine sulfoxide. A 9; half-length repeat occupies 231–241 (PALEDLRQGLL). Repeat unit 10 spans residues 242 to 265 (PVLENLKVSILAAIDEASKKLNAQ).

Belongs to the apolipoprotein A1/A4/E family. In terms of assembly, homodimer. Interacts with APOA1BP and CLU. Component of a sperm activating protein complex (SPAP), consisting of APOA1, an immunoglobulin heavy chain, an immunoglobulin light chain and albumin. Interacts with NDRG1. Interacts with SCGB3A2. Interacts with NAXE and YJEFN3. In terms of processing, glycosylated. Palmitoylated. Post-translationally, phosphorylation sites are present in the extracellular medium. As to expression, major protein of plasma HDL, also found in chylomicrons. Synthesized predominantly in the intestine and the liver.

It localises to the secreted. Functionally, participates in the reverse transport of cholesterol from tissues to the liver for excretion by promoting cholesterol efflux from tissues and by acting as a cofactor for the lecithin cholesterol acyltransferase (LCAT). As part of the SPAP complex, activates spermatozoa motility. This is Apolipoprotein A-I (APOA1) from Sus scrofa (Pig).